Here is a 487-residue protein sequence, read N- to C-terminus: Glutamyl-tRNA(Gln) amidotransferase subunit A (487 aa).

Active-site charge relay system residues include Lys79 and Ser154. Residue Ser178 is the Acyl-ester intermediate of the active site.

Belongs to the amidase family. GatA subfamily. Heterotrimer of A, B and C subunits.

The enzyme catalyses L-glutamyl-tRNA(Gln) + L-glutamine + ATP + H2O = L-glutaminyl-tRNA(Gln) + L-glutamate + ADP + phosphate + H(+). Functionally, allows the formation of correctly charged Gln-tRNA(Gln) through the transamidation of misacylated Glu-tRNA(Gln) in organisms which lack glutaminyl-tRNA synthetase. The reaction takes place in the presence of glutamine and ATP through an activated gamma-phospho-Glu-tRNA(Gln). In Moorella thermoacetica (strain ATCC 39073 / JCM 9320), this protein is Glutamyl-tRNA(Gln) amidotransferase subunit A.